Here is a 435-residue protein sequence, read N- to C-terminus: NADH-quinone oxidoreductase subunit D 2 (435 aa).

Belongs to the complex I 49 kDa subunit family. In terms of assembly, NDH-1 is composed of 14 different subunits. Subunits NuoB, C, D, E, F, and G constitute the peripheral sector of the complex.

It localises to the cell inner membrane. It catalyses the reaction a quinone + NADH + 5 H(+)(in) = a quinol + NAD(+) + 4 H(+)(out). Functionally, NDH-1 shuttles electrons from NADH, via FMN and iron-sulfur (Fe-S) centers, to quinones in the respiratory chain. The immediate electron acceptor for the enzyme in this species is believed to be ubiquinone. Couples the redox reaction to proton translocation (for every two electrons transferred, four hydrogen ions are translocated across the cytoplasmic membrane), and thus conserves the redox energy in a proton gradient. The protein is NADH-quinone oxidoreductase subunit D 2 of Stenotrophomonas maltophilia (strain R551-3).